The chain runs to 390 residues: Cyclic amide hydrolase (390 aa).

Residues 1–118 (MPNPEASLSP…TVVTQEWVAD (118 aa)) form an RU A region. Substrate-binding positions include R66 and 97 to 98 (SG). An RU B region spans residues 127–268 (GLVVGRGHTE…GEVLLLANSA (142 aa)). The active site involves K177. Residues N213, 251–252 (SS), K346, and 365–366 (SG) each bind substrate. The active-site Nucleophile is the S251. Residues 274–390 (LRIGHGITRD…VAAVVRRLPA (117 aa)) form an RU C region.

It belongs to the cyclic amide hydrolase (CyAH) family. Homotetramer; disulfide-linked. The disulfide forms between 2 monomers in the tetramer, such that each tetramer contains 2 sets of vicinal disulfides.

Its function is as follows. Cyclic amide hydrolase of unknown substrate specificity. Catalyzes the hydrolytic ring-opening of a cyclic amide. Does not act on cyanuric acid nor barbituric acid. In Pseudofrankia inefficax (strain DSM 45817 / CECT 9037 / DDB 130130 / EuI1c) (Frankia inefficax), this protein is Cyclic amide hydrolase.